Reading from the N-terminus, the 361-residue chain is Histidinol-phosphate aminotransferase (361 aa).

At lysine 224 the chain carries N6-(pyridoxal phosphate)lysine.

The protein belongs to the class-II pyridoxal-phosphate-dependent aminotransferase family. Histidinol-phosphate aminotransferase subfamily. In terms of assembly, homodimer. It depends on pyridoxal 5'-phosphate as a cofactor.

The enzyme catalyses L-histidinol phosphate + 2-oxoglutarate = 3-(imidazol-4-yl)-2-oxopropyl phosphate + L-glutamate. It functions in the pathway amino-acid biosynthesis; L-histidine biosynthesis; L-histidine from 5-phospho-alpha-D-ribose 1-diphosphate: step 7/9. In Bacillus licheniformis (strain ATCC 14580 / DSM 13 / JCM 2505 / CCUG 7422 / NBRC 12200 / NCIMB 9375 / NCTC 10341 / NRRL NRS-1264 / Gibson 46), this protein is Histidinol-phosphate aminotransferase.